The sequence spans 785 residues: Cadherin-7 (785 aa).

The N-terminal stretch at 1–27 (MKLGKVEFCHLLQIIALFLCLSGMNQA) is a signal peptide. Positions 28–47 (EPSRSRSKPYFQSGRTRTKR) are excised as a propeptide. At 48–607 (SWVWNQFFVL…AYILPAGLST (560 aa)) the chain is on the extracellular side. Cadherin domains lie at 49–153 (WVWN…EPKF), 154–262 (LDGP…PPRF), 263–377 (PRRS…PPVF), 378–482 (TSRL…APEF), and 482–599 (FAME…AEAY). 2 N-linked (GlcNAc...) asparagine glycosylation sites follow: N449 and N530. A helical transmembrane segment spans residues 608–628 (GALIAILACVLTLLVLVLLIV). Residues 629-785 (TMRRRKKEPL…YGSGPDCLYS (157 aa)) are Cytoplasmic-facing.

It is found in the cell membrane. Cadherins are calcium-dependent cell adhesion proteins. They preferentially interact with themselves in a homophilic manner in connecting cells; cadherins may thus contribute to the sorting of heterogeneous cell types. This is Cadherin-7 (CDH7) from Gallus gallus (Chicken).